The chain runs to 320 residues: Tabersonine synthase (320 aa).

An Involved in the stabilization of the negatively charged intermediate by the formation of the oxyanion hole motif is present at residues 78–80 (HGA). Glycine 81 lines the (-)-tabersonine pocket. The Proton acceptor role is filled by serine 170. Aspartate 266 is a catalytic residue. (-)-tabersonine is bound at residue tyrosine 297. The Proton donor/acceptor role is filled by tyrosine 297.

Belongs to the 'GDXG' lipolytic enzyme family. As to quaternary structure, interacts with dehydroprecondylocarpine acetate synthase (DPAS). In terms of tissue distribution, expressed in leaf epidermis.

Its subcellular location is the cytoplasm. It is found in the cytosol. The protein localises to the nucleus. The enzyme catalyses dehydrosecodine = (-)-tabersonine. The catalysed reaction is dihydroprecondylocarpine acetate = (-)-tabersonine + acetate + H(+). It participates in alkaloid biosynthesis. Its function is as follows. Component of iboga and aspidosperma monoterpenoid indole alkaloids (MIAs, e.g. tabersonine and catharanthine) biosynthesis pathway from 19E-geissoschizine, psychoactive compounds likely to be used in the treatment of opioid dependence. Catalyzes the conversion of dehydrosecodine to tabersonine, a precursor of vindoline; this process starts with the conversion of dihydroprecondylocarpine acetate to dehydrosecodine. This chain is Tabersonine synthase, found in Catharanthus roseus (Madagascar periwinkle).